The following is a 243-amino-acid chain: Small ribosomal subunit protein eS4 (243 aa).

Residues isoleucine 43–asparagine 105 enclose the S4 RNA-binding domain.

The protein belongs to the eukaryotic ribosomal protein eS4 family.

In Pyrococcus abyssi (strain GE5 / Orsay), this protein is Small ribosomal subunit protein eS4 (rps4e).